A 263-amino-acid chain; its full sequence is Palmitoyltransferase ZDHHC22 (263 aa).

The Cytoplasmic segment spans residues 1–9 (MLALRLLNV). Residues 10-30 (VAPAYFLCISLVTFVLQLFLF) traverse the membrane as a helical segment. Residues 31–48 (LPSMREDPAAARLFSPAL) lie on the Lumenal side of the membrane. The helical transmembrane segment at 49-69 (LHGALFLFLSANALGNYVLVI) threads the bilayer. At 70-125 (QNSPDDLGACQGASARKTPCPSPSTHFCRVCARVTLRHDHHCFFTGNCIGSRNMRN) the chain is on the cytoplasmic side. The DHHC domain maps to 92–131 (PSTHFCRVCARVTLRHDHHCFFTGNCIGSRNMRNFVLFCL). Cys-111 functions as the S-palmitoyl cysteine intermediate in the catalytic mechanism. The next 2 membrane-spanning stretches (helical) occupy residues 126 to 146 (FVLF…AGVA) and 147 to 167 (YISA…TLLP). Topologically, residues 168-182 (TSISQFFSGAVLGSE) are cytoplasmic. The chain crosses the membrane as a helical span at residues 183–203 (MFVILMLYLWFAIGLACAGFC). At 204-263 (CHQLLLILRGQTRHQVRKGVAVRARPWRKNLQEVFGKRWLLGLLVPMFNVGSESSKQQDK) the chain is on the lumenal side.

It belongs to the DHHC palmitoyltransferase family. Interacts with CNN3. Widely expressed.

It is found in the endoplasmic reticulum membrane. The protein localises to the golgi apparatus membrane. The enzyme catalyses L-cysteinyl-[protein] + hexadecanoyl-CoA = S-hexadecanoyl-L-cysteinyl-[protein] + CoA. Functionally, palmitoyltransferase that could catalyze the addition of palmitate onto various protein substrates and be involved in a variety of cellular processes. Catalyzes the palmitoylation of KCNMA1, regulating localization of KCNMA1 to the plasma membrane. Might also mediate palmitoylation of CNN3. This chain is Palmitoyltransferase ZDHHC22, found in Homo sapiens (Human).